Consider the following 440-residue polypeptide: Gap junction alpha-8 protein (440 aa).

An intramembrane segment occupies 2-12 (GDWSFLGNILE). Residues 13 to 21 (EVNEHSTVI) lie on the Cytoplasmic side of the membrane. The helical transmembrane segment at 22–42 (GRVWLTVLFIFRILILGTAAE) threads the bilayer. The Extracellular segment spans residues 43–71 (FVWGDEQSDFVCNTQQPGCENVCYDEAFP). Cystine bridges form between cysteine 54–cysteine 201, cysteine 61–cysteine 195, and cysteine 65–cysteine 190. Residues 72 to 92 (ISHIRLWVLQIIFVSTPSLMY) traverse the membrane as a helical segment. Residues 93 to 161 (VGHAVHHVRM…GTLLRTYVCH (69 aa)) lie on the Cytoplasmic side of the membrane. Residues 111–143 (AEELCQQSRSNGGERVPIAPDQASIRKSSSSSK) are disordered. The helical transmembrane segment at 162–182 (IIFKTLFEVGFIVGHYFLYGF) threads the bilayer. Residues 183–210 (RILPLYRCSRWPCPNVVDCFVSRPTEKT) are Extracellular-facing. Residues 211 to 231 (IFILFMLSVAFVSLFLNIMEM) form a helical membrane-spanning segment. The Cytoplasmic segment spans residues 232–440 (SHLGMKGIRS…SRARSDDLTI (209 aa)). Residues 334–440 (GAQEVEREEQ…SRARSDDLTI (107 aa)) form a disordered region. 2 stretches are compositionally biased toward basic and acidic residues: residues 353-364 (VGEKKQEAEKVA) and 375-399 (DGEK…EKVT). Low complexity predominate over residues 423–432 (LSRLSKASSR).

The protein belongs to the connexin family. Alpha-type (group II) subfamily. A hemichannel or connexon is composed of a hexamer of connexins. A functional gap junction is formed by the apposition of two hemichannels. Forms heteromeric channels with GJA3. In terms of tissue distribution, detected in eye lens (at protein level).

It localises to the cell membrane. The protein localises to the cell junction. Its subcellular location is the gap junction. Structural component of eye lens gap junctions. Gap junctions are dodecameric channels that connect the cytoplasm of adjoining cells. They are formed by the docking of two hexameric hemichannels, one from each cell membrane. Small molecules and ions diffuse from one cell to a neighboring cell via the central pore. This Rattus norvegicus (Rat) protein is Gap junction alpha-8 protein (Gja8).